A 464-amino-acid chain; its full sequence is Olfactomedin (464 aa).

An N-terminal signal peptide occupies residues 1–16 (MYICLLTLVLIHAAAA). 6 N-linked (GlcNAc...) asparagine glycosylation sites follow: Asn21, Asn85, Asn143, Asn228, Asn279, and Asn383. The Olfactomedin-like domain maps to 192 to 464 (SCQHQGLAHI…LLHYDIALKP (273 aa)). Residues Cys193 and Cys394 are joined by a disulfide bond.

As to quaternary structure, oligomer; disulfide-linked. Post-translationally, most, if not all, of the six potential sites for N-glycosylation carry carbohydrate moieties of 8-10 sugar residues. Expressed exclusively in olfactory neuroepithelium.

The protein resides in the secreted. The protein localises to the extracellular space. In terms of biological role, may influence the maintenance, growth, or differentiation of chemosensory cilia on the apical dendrites of olfactory neurons. Major component of the extracellular matrix of the olfactory neuroepithelium. This chain is Olfactomedin, found in Aquarana catesbeiana (American bullfrog).